A 1269-amino-acid polypeptide reads, in one-letter code: DNA-directed RNA polymerase subunit beta (1269 aa).

This sequence belongs to the RNA polymerase beta chain family. As to quaternary structure, the RNAP catalytic core consists of 2 alpha, 1 beta, 1 beta' and 1 omega subunit. When a sigma factor is associated with the core the holoenzyme is formed, which can initiate transcription.

The enzyme catalyses RNA(n) + a ribonucleoside 5'-triphosphate = RNA(n+1) + diphosphate. Its function is as follows. DNA-dependent RNA polymerase catalyzes the transcription of DNA into RNA using the four ribonucleoside triphosphates as substrates. The polypeptide is DNA-directed RNA polymerase subunit beta (Porphyromonas gingivalis (strain ATCC BAA-308 / W83)).